The following is a 467-amino-acid chain: Tyrosine phenol-lyase (467 aa).

At Lys268 the chain carries N6-(pyridoxal phosphate)lysine.

It belongs to the beta-eliminating lyase family. In terms of assembly, homotetramer. Pyridoxal 5'-phosphate is required as a cofactor.

The catalysed reaction is L-tyrosine + H2O = phenol + pyruvate + NH4(+). The polypeptide is Tyrosine phenol-lyase (Nostoc punctiforme (strain ATCC 29133 / PCC 73102)).